Reading from the N-terminus, the 688-residue chain is Polyribonucleotide nucleotidyltransferase (688 aa).

2 residues coordinate Mg(2+): D484 and D490. Residues 550 to 609 form the KH domain; it reads PTTEIFNVAPDKIVEIIGQGGRVIKEIVEKFEVKIDLNKPSGEVKIMGNKERVLKTKEFI. Residues 626–688 enclose the S1 motif domain; it reads DEVLEAQVKR…NKGKIALDLA (63 aa).

This sequence belongs to the polyribonucleotide nucleotidyltransferase family. Mg(2+) is required as a cofactor.

The protein resides in the cytoplasm. The catalysed reaction is RNA(n+1) + phosphate = RNA(n) + a ribonucleoside 5'-diphosphate. In terms of biological role, involved in mRNA degradation. Catalyzes the phosphorolysis of single-stranded polyribonucleotides processively in the 3'- to 5'-direction. The protein is Polyribonucleotide nucleotidyltransferase of Helicobacter pylori (strain HPAG1).